The primary structure comprises 256 residues: 6-carboxyhexanoate--CoA ligase (256 aa).

This sequence belongs to the BioW family. As to quaternary structure, homodimer. It depends on Mg(2+) as a cofactor.

It catalyses the reaction heptanedioate + ATP + CoA = 6-carboxyhexanoyl-CoA + AMP + diphosphate. Its pathway is metabolic intermediate metabolism; pimeloyl-CoA biosynthesis; pimeloyl-CoA from pimelate: step 1/1. Functionally, catalyzes the transformation of pimelate into pimeloyl-CoA with concomitant hydrolysis of ATP to AMP. The chain is 6-carboxyhexanoate--CoA ligase from Methanobrevibacter ruminantium (strain ATCC 35063 / DSM 1093 / JCM 13430 / OCM 146 / M1) (Methanobacterium ruminantium).